We begin with the raw amino-acid sequence, 62 residues long: Large ribosomal subunit protein bL32 (62 aa).

Residues 1–20 (MAVPARHTSKQKKRSRRGHI) form a disordered region. The segment covering 7-20 (HTSKQKKRSRRGHI) has biased composition (basic residues).

It belongs to the bacterial ribosomal protein bL32 family.

In Lactobacillus acidophilus (strain ATCC 700396 / NCK56 / N2 / NCFM), this protein is Large ribosomal subunit protein bL32.